The primary structure comprises 369 residues: 5-amino-6-(D-ribitylamino)uracil--L-tyrosine 4-hydroxyphenyl transferase (369 aa).

The 237-residue stretch at 56–292 (VTFVVNRNIN…AVARLYFGPL (237 aa)) folds into the Radical SAM core domain. 3 residues coordinate [4Fe-4S] cluster: cysteine 70, cysteine 74, and cysteine 77.

This sequence belongs to the radical SAM superfamily. CofH family. As to quaternary structure, consists of two subunits, CofG and CofH. The cofactor is [4Fe-4S] cluster.

It carries out the reaction 5-amino-6-(D-ribitylamino)uracil + L-tyrosine + S-adenosyl-L-methionine = 5-amino-5-(4-hydroxybenzyl)-6-(D-ribitylimino)-5,6-dihydrouracil + 2-iminoacetate + 5'-deoxyadenosine + L-methionine + H(+). Its pathway is cofactor biosynthesis; coenzyme F0 biosynthesis. Its function is as follows. Catalyzes the radical-mediated synthesis of 5-amino-5-(4-hydroxybenzyl)-6-(D-ribitylimino)-5,6-dihydrouracil from 5-amino-6-(D-ribitylamino)uracil and L-tyrosine. The sequence is that of 5-amino-6-(D-ribitylamino)uracil--L-tyrosine 4-hydroxyphenyl transferase from Methanopyrus kandleri (strain AV19 / DSM 6324 / JCM 9639 / NBRC 100938).